Here is a 496-residue protein sequence, read N- to C-terminus: Angiopoietin-2 (496 aa).

Residues 1–18 (MWQIIFLTFGWDLVLASA) form the signal peptide. Residues asparagine 89, asparagine 119, asparagine 133, asparagine 151, asparagine 240, and asparagine 304 are each glycosylated (N-linked (GlcNAc...) asparagine). Positions 159–256 (QLLQHSISTN…QQHDLMETVN (98 aa)) form a coiled coil. The region spanning 275 to 495 (KEEQTTFRDC…ATTMMIRPAD (221 aa)) is the Fibrinogen C-terminal domain. Cysteine 284 and cysteine 313 are oxidised to a cystine. Residues aspartate 429, aspartate 431, cysteine 433, and cysteine 435 each contribute to the Ca(2+) site. 2 disulfides stabilise this stretch: cysteine 433/cysteine 435 and cysteine 437/cysteine 450.

In terms of assembly, interacts with TEK/TIE2, competing for the same binding site as ANGPT1. Interacts with ITGA5. Interacts with SVEP1/polydom. Interacts with THBD; this interaction significantly inhibits the generation of activated PC and TAFIa/CPB2 by the thrombin/thrombomodulin complex. As to expression, expressed in the ovary, uterus and placenta.

The protein localises to the secreted. In terms of biological role, binds to TEK/TIE2, competing for the ANGPT1 binding site, and modulating ANGPT1 signaling. Can induce tyrosine phosphorylation of TEK/TIE2 in the absence of ANGPT1. In the absence of angiogenic inducers, such as VEGF, ANGPT2-mediated loosening of cell-matrix contacts may induce endothelial cell apoptosis with consequent vascular regression. In concert with VEGF, it may facilitate endothelial cell migration and proliferation, thus serving as a permissive angiogenic signal. Involved in the regulation of lymphangiogenesis. The chain is Angiopoietin-2 (Angpt2) from Mus musculus (Mouse).